Reading from the N-terminus, the 137-residue chain is Large-conductance mechanosensitive channel (137 aa).

Transmembrane regions (helical) follow at residues 10 to 30 and 76 to 96; these read FAMR…AAFG and GVFI…FMAI.

It belongs to the MscL family. Homopentamer.

Its subcellular location is the cell inner membrane. In terms of biological role, channel that opens in response to stretch forces in the membrane lipid bilayer. May participate in the regulation of osmotic pressure changes within the cell. The chain is Large-conductance mechanosensitive channel from Escherichia coli O45:K1 (strain S88 / ExPEC).